Reading from the N-terminus, the 142-residue chain is Autophagy-related protein 31 (142 aa).

It localises to the cytoplasm. Its subcellular location is the cytoskeleton. It is found in the preautophagosomal structure. In terms of biological role, plays a role in starvation-induced autophagy. Involved in mitophagy. Functions with ATG17 and ATG29 at the preautophagosomal structure (PAS) in order to form normal autophagosomes under starvation conditions. May be involved in microtubule function, such as chromosome segregation and karyogamy. This Eremothecium gossypii (strain ATCC 10895 / CBS 109.51 / FGSC 9923 / NRRL Y-1056) (Yeast) protein is Autophagy-related protein 31 (CIS1).